A 329-amino-acid chain; its full sequence is Small ribosomal subunit protein uS2 (329 aa).

This sequence belongs to the universal ribosomal protein uS2 family.

This is Small ribosomal subunit protein uS2 from Bradyrhizobium sp. (strain ORS 278).